The primary structure comprises 512 residues: Gamma-aminobutyric acid receptor subunit beta-2 (512 aa).

A signal peptide spans 1-25 (MWRVRKRGYFGIWSFPLIIAAVCAQ). Residues 26 to 244 (SVNDPSNMSL…SFKLKRNIGY (219 aa)) are Extracellular-facing. N-linked (GlcNAc...) asparagine glycans are attached at residues asparagine 32 and asparagine 104. Tyrosine 121 provides a ligand contact to histamine. An intrachain disulfide couples cysteine 160 to cysteine 174. Asparagine 173 is a glycosylation site (N-linked (GlcNAc...) asparagine). Residues 180 to 181 (SY) and threonine 226 each bind histamine. Residues tyrosine 181 and threonine 226 each coordinate 4-aminobutanoate. Helical transmembrane passes span 245-266 (FILQ…SFWI), 270-292 (ASAA…NTHL), and 304-326 (AIDM…YALV). Residues 327 to 489 (NYIFFGRGPQ…DLTDVNAIDR (163 aa)) lie on the Cytoplasmic side of the membrane. Residue tyrosine 441 is modified to Phosphotyrosine. The helical transmembrane segment at 490 to 511 (WSRIFFPVVFSFFNIVYWLYYV) threads the bilayer.

It belongs to the ligand-gated ion channel (TC 1.A.9) family. Gamma-aminobutyric acid receptor (TC 1.A.9.5) subfamily. GABRB2 sub-subfamily. In terms of assembly, heteropentamer, formed by a combination of alpha (GABRA1-6), beta (GABRB1-3), gamma (GABRG1-3), delta (GABRD), epsilon (GABRE), rho (GABRR1-3), pi (GABRP) and theta (GABRQ) chains, each subunit exhibiting distinct physiological and pharmacological properties. Interacts with UBQLN1. May interact with KIF21B. Identified in a complex of 720 kDa composed of LHFPL4, NLGN2, GABRA1, GABRB2, GABRG2 and GABRB3. In terms of processing, glycosylated.

The protein localises to the postsynaptic cell membrane. The protein resides in the cell membrane. It localises to the cytoplasmic vesicle. It catalyses the reaction chloride(in) = chloride(out). With respect to regulation, allosterically activated by benzodiazepines and the anesthetic etomidate. Inhibited by the antagonist bicuculline. Potentiated by histamine. Beta subunit of the heteropentameric ligand-gated chloride channel gated by gamma-aminobutyric acid (GABA), a major inhibitory neurotransmitter in the brain. GABA-gated chloride channels, also named GABA(A) receptors (GABAAR), consist of five subunits arranged around a central pore and contain GABA active binding site(s) located at the alpha and beta subunit interface(s). When activated by GABA, GABAARs selectively allow the flow of chloride anions across the cell membrane down their electrochemical gradient. Chloride influx into the postsynaptic neuron following GABAAR opening decreases the neuron ability to generate a new action potential, thereby reducing nerve transmission. GABAARs containing alpha-1 and beta-2 or -3 subunits exhibit synaptogenic activity; the gamma-2 subunit being necessary but not sufficient to induce rapid synaptic contacts formation. Extrasynaptic beta-2 receptors contribute to the tonic GABAergic inhibition. Beta-containing GABAARs can simultaneously bind GABA and histamine where histamine binds at the interface of two neighboring beta subunits, which may be involved in the regulation of sleep and wakefulness. In Mus musculus (Mouse), this protein is Gamma-aminobutyric acid receptor subunit beta-2.